The chain runs to 339 residues: Alcohol dehydrogenase notN (339 aa).

Zn(2+)-binding residues include Cys44, His65, Glu66, Cys99, Cys102, Cys110, and Cys152. Residue His65 participates in an alcohol binding. Residues 176 to 181 (GLGGLG), 196 to 201 (VAISRG), Lys204, 263 to 265 (LSF), 287 to 289 (PSG), and 295 to 297 (EDA) each bind NAD(+).

This sequence belongs to the zinc-containing alcohol dehydrogenase family. Requires Zn(2+) as cofactor.

The catalysed reaction is a primary alcohol + NAD(+) = an aldehyde + NADH + H(+). It catalyses the reaction a secondary alcohol + NAD(+) = a ketone + NADH + H(+). In terms of biological role, alcohol dehydrogenase; part of the gene cluster that mediates the biosynthesis of notoamide, a fungal indole alkaloid that belongs to a family of natural products containing a characteristic bicyclo[2.2.2]diazaoctane core. The first step of notoamide biosynthesis involves coupling of L-proline and L-tryptophan by the bimodular NRPS notE, to produce cyclo-L-tryptophan-L-proline called brevianamide F. The reverse prenyltransferase notF then acts as a deoxybrevianamide E synthase and converts brevianamide F to deoxybrevianamide E via reverse prenylation at C-2 of the indole ring leading to the bicyclo[2.2.2]diazaoctane core. Deoxybrevianamide E is further hydroxylated at C-6 of the indole ring, likely catalyzed by the cytochrome P450 monooxygenase notG, to yield 6-hydroxy-deoxybrevianamide E. 6-hydroxy-deoxybrevianamide E is a specific substrate of the prenyltransferase notC for normal prenylation at C-7 to produce 6-hydroxy-7-prenyl-deoxybrevianamide, also called notoamide S. As the proposed pivotal branching point in notoamide biosynthesis, notoamide S can be diverted to notoamide E through an oxidative pyran ring closure putatively catalyzed by either notH cytochrome P450 monooxygenase or the notD FAD-linked oxidoreductase. This step would be followed by an indole 2,3-epoxidation-initiated pinacol-like rearrangement catalyzed by the notB FAD-dependent monooxygenase leading to the formation of notoamide C and notoamide D. On the other hand notoamide S is converted to notoamide T by notH (or notD), a bifunctional oxidase that also functions as the intramolecular Diels-Alderase responsible for generation of (+)-notoamide T. To generate antipodal (-)-notoaminide T, notH' (or notD') in Aspergillus versicolor is expected to catalyze a Diels-Alder reaction leading to the opposite stereochemistry. The remaining oxidoreductase notD (or notH) likely catalyzes the oxidative pyran ring formation to yield (+)-stephacidin A. The FAD-dependent monooxygenase notI is highly similar to notB and is predicted to catalyze a similar conversion from (+)-stephacidin A to (-)-notoamide B via the 2,3-epoxidation of (+)-stephacidin A followed by a pinacol-type rearrangement. Finally, it remains unclear which enzyme could be responsible for the final hydroxylation steps leading to notoamide A and sclerotiamide. The function of notN in the notoamide biosynthesis has not been determined yet. In Aspergillus sp. (strain MF297-2), this protein is Alcohol dehydrogenase notN.